Consider the following 328-residue polypeptide: Formyltetrahydrofolate deformylase 2, mitochondrial (328 aa).

The N-terminal 12 residues, 1–12, are a transit peptide targeting the mitochondrion; sequence MIRRVSTTSCLS. An ACT domain is found at 46–129; sequence FHVFHCPDVV…SVVRVPSLDP (84 aa). D272 is an active-site residue.

This sequence belongs to the PurU family. In terms of tissue distribution, expressed in leaves, cotyledons, roots, seeds and flowers.

The protein localises to the mitochondrion. The enzyme catalyses (6R)-10-formyltetrahydrofolate + H2O = (6S)-5,6,7,8-tetrahydrofolate + formate + H(+). Functionally, deformylase involved in photorespiration. Prevents excessive accumulation of 5-formyl tetrahydrofolate (THF), a potent inhibitor of the Gly decarboxylase/Ser hydroxymethyltransferase complex. This is Formyltetrahydrofolate deformylase 2, mitochondrial (PURU2) from Arabidopsis thaliana (Mouse-ear cress).